Reading from the N-terminus, the 370-residue chain is 3-isopropylmalate dehydrogenase (370 aa).

Substrate is bound by residues arginine 99, arginine 109, arginine 137, and aspartate 227. Mg(2+) contacts are provided by aspartate 227, aspartate 251, and aspartate 255. 290 to 302 (GSAPDIAGQDKAN) contacts NAD(+).

Belongs to the isocitrate and isopropylmalate dehydrogenases family. LeuB type 1 subfamily. As to quaternary structure, homodimer. Mg(2+) is required as a cofactor. Requires Mn(2+) as cofactor.

Its subcellular location is the cytoplasm. It carries out the reaction (2R,3S)-3-isopropylmalate + NAD(+) = 4-methyl-2-oxopentanoate + CO2 + NADH. It functions in the pathway amino-acid biosynthesis; L-leucine biosynthesis; L-leucine from 3-methyl-2-oxobutanoate: step 3/4. Functionally, catalyzes the oxidation of 3-carboxy-2-hydroxy-4-methylpentanoate (3-isopropylmalate) to 3-carboxy-4-methyl-2-oxopentanoate. The product decarboxylates to 4-methyl-2 oxopentanoate. This Rhodospirillum rubrum (strain ATCC 11170 / ATH 1.1.1 / DSM 467 / LMG 4362 / NCIMB 8255 / S1) protein is 3-isopropylmalate dehydrogenase.